The primary structure comprises 219 residues: Pyridoxine/pyridoxamine 5'-phosphate oxidase (219 aa).

The segment at 1–23 (MTSSVIPPSPSAADYAAEGDRPL) is disordered. FMN contacts are provided by residues 66–71 (RIVLLK), 81–82 (FT), Lys-88, and Gln-110. Lys-71 contributes to the substrate binding site. 3 residues coordinate substrate: Tyr-128, Arg-132, and Ser-136. FMN is bound by residues 145–146 (QS) and Trp-191. 197 to 199 (RMH) contacts substrate. Arg-201 serves as a coordination point for FMN.

It belongs to the pyridoxamine 5'-phosphate oxidase family. Homodimer. It depends on FMN as a cofactor.

The catalysed reaction is pyridoxamine 5'-phosphate + O2 + H2O = pyridoxal 5'-phosphate + H2O2 + NH4(+). The enzyme catalyses pyridoxine 5'-phosphate + O2 = pyridoxal 5'-phosphate + H2O2. Its pathway is cofactor metabolism; pyridoxal 5'-phosphate salvage; pyridoxal 5'-phosphate from pyridoxamine 5'-phosphate: step 1/1. It functions in the pathway cofactor metabolism; pyridoxal 5'-phosphate salvage; pyridoxal 5'-phosphate from pyridoxine 5'-phosphate: step 1/1. Functionally, catalyzes the oxidation of either pyridoxine 5'-phosphate (PNP) or pyridoxamine 5'-phosphate (PMP) into pyridoxal 5'-phosphate (PLP). This is Pyridoxine/pyridoxamine 5'-phosphate oxidase from Hyphomonas neptunium (strain ATCC 15444).